A 363-amino-acid chain; its full sequence is Histidinol-phosphate aminotransferase (363 aa).

Lysine 215 is subject to N6-(pyridoxal phosphate)lysine.

This sequence belongs to the class-II pyridoxal-phosphate-dependent aminotransferase family. Histidinol-phosphate aminotransferase subfamily. Homodimer. It depends on pyridoxal 5'-phosphate as a cofactor.

The catalysed reaction is L-histidinol phosphate + 2-oxoglutarate = 3-(imidazol-4-yl)-2-oxopropyl phosphate + L-glutamate. It functions in the pathway amino-acid biosynthesis; L-histidine biosynthesis; L-histidine from 5-phospho-alpha-D-ribose 1-diphosphate: step 7/9. In Buchnera aphidicola subsp. Diuraphis noxia, this protein is Histidinol-phosphate aminotransferase.